Consider the following 175-residue polypeptide: Nucleoside triphosphate/diphosphate phosphatase (175 aa).

The active-site Proton donor is arginine 23. Mg(2+) is bound by residues asparagine 87, aspartate 103, aspartate 105, aspartate 107, aspartate 120, and glutamate 123.

This sequence belongs to the Ntdp family. It depends on Mg(2+) as a cofactor.

It catalyses the reaction a ribonucleoside 5'-triphosphate + H2O = a ribonucleoside 5'-diphosphate + phosphate + H(+). It carries out the reaction a ribonucleoside 5'-diphosphate + H2O = a ribonucleoside 5'-phosphate + phosphate + H(+). Its function is as follows. Has nucleoside phosphatase activity towards nucleoside triphosphates and nucleoside diphosphates. The sequence is that of Nucleoside triphosphate/diphosphate phosphatase from Shouchella clausii (strain KSM-K16) (Alkalihalobacillus clausii).